The sequence spans 499 residues: Glycerol kinase (499 aa).

T15 serves as a coordination point for ADP. T15, T16, and S17 together coordinate ATP. T15 is a binding site for sn-glycerol 3-phosphate. R19 is an ADP binding site. 4 residues coordinate sn-glycerol 3-phosphate: R85, E86, Y137, and D246. Glycerol is bound by residues R85, E86, Y137, D246, and Q247. ADP contacts are provided by T268 and G311. Residues T268, G311, Q315, and G412 each coordinate ATP. The ADP site is built by G412 and N416.

This sequence belongs to the FGGY kinase family.

It carries out the reaction glycerol + ATP = sn-glycerol 3-phosphate + ADP + H(+). Its pathway is polyol metabolism; glycerol degradation via glycerol kinase pathway; sn-glycerol 3-phosphate from glycerol: step 1/1. With respect to regulation, inhibited by fructose 1,6-bisphosphate (FBP). In terms of biological role, key enzyme in the regulation of glycerol uptake and metabolism. Catalyzes the phosphorylation of glycerol to yield sn-glycerol 3-phosphate. The protein is Glycerol kinase of Parabacteroides distasonis (strain ATCC 8503 / DSM 20701 / CIP 104284 / JCM 5825 / NCTC 11152).